Consider the following 498-residue polypeptide: XK-related protein 4 (498 aa).

The interval 24–46 (SEHSGSVQGLHPGAQPDSAGAGD) is disordered. A run of 2 helical transmembrane segments spans residues 81–101 (CLWI…DVWL) and 111–131 (YWWF…VQLF). Residues 166 to 203 (SHGDVTAQHHPATPQRQASTASRNTTTNSTASTGLGPR) are disordered. Residues 183–198 (ASTASRNTTTNSTAST) are compositionally biased toward low complexity. 2 helical membrane passes run 302–322 (LFIY…LWYL) and 332–352 (FAVP…VFML).

Belongs to the XK family.

Its subcellular location is the cell membrane. The catalysed reaction is a 1,2-diacyl-sn-glycero-3-phospho-L-serine(in) = a 1,2-diacyl-sn-glycero-3-phospho-L-serine(out). Functionally, phospholipid scramblase that promotes phosphatidylserine exposure on apoptotic cell surface. Phosphatidylserine is a specific marker only present at the surface of apoptotic cells and acts as a specific signal for engulfment. This Tetraodon nigroviridis (Spotted green pufferfish) protein is XK-related protein 4.